We begin with the raw amino-acid sequence, 354 residues long: MLCSLFLLLLAVGRVQTTRPCFPGCQCEEETFGLFDSFSLIRVDCSSLGPHIVPVPIPLDTAHLDLSSNRLETVNESVLAGPGYTTLAGLDLSYNLLTSIMPSAFSRLRYLESLDLSHNGLAALPAEIFTSSPLSDINLSHNRLREVSISAFTTHSQGRALHVDLSHNLIHRLLPHPARASLPAPTIQSLNLSWNRFRAVPDLRDLPLRYLSLDGNPLATINPDAFMGLAGLTHLSLASLQGILHLPPHGFRELPGLQVLDLSGNPKLKWAGAEVFSGLGLLQELDLSGSSLVPLPEMLLHHLPALQSVSVGQDVQCRRLVREGAYHRQPGSSPKVVLHCGDTQESAARGPDIL.

A signal peptide spans 1 to 17; that stretch reads MLCSLFLLLLAVGRVQT. Positions 18–59 constitute an LRRNT domain; the sequence is TRPCFPGCQCEEETFGLFDSFSLIRVDCSSLGPHIVPVPIPL. LRR repeat units follow at residues 60–81, 86–107, 110–131, 133–154, 160–180, 186–207, 208–228, 231–253, 256–277, and 281–302; these read DTAH…VLAG, TLAG…AFSR, YLES…IFTS, PLSD…AFTT, ALHV…PARA, TIQS…RDLP, LRYL…AFMG, GLTH…GFRE, GLQV…EVFS, and LLQE…LLHH. A glycan (N-linked (GlcNAc...) asparagine) is linked at N75. Residue N138 is glycosylated (N-linked (GlcNAc...) asparagine). Residue N191 is glycosylated (N-linked (GlcNAc...) asparagine).

Interacts with FZD4 (via FZ domain); competes with WNT2B for binding to FZD4, inhibiting Wnt signaling and repressing peripheral eye development. Interacts with TGFB1; the interaction contributes to regulation of the hair cycle. Interacts with netrin. Interacts with CCN2. As to expression, expressed in macrophages in inflamed wounds with wound expression starting 2 days post-wounding (dpw) (at protein level). At 7 dpw, expressed from epidermis and extracellular matrix in the wound edge to neoepidermis and granulation tissue and in panniculus carnosus under the granulation tissue (at protein level). After fibrosis, disappears in the dermal area at 11 dpw (at protein level). Expressed in the hair follicle during morphogenesis and the hair cycle (at protein level). In embryonic brain, strong expression in the olfactory bulb, anterior olfactory nucleus, neocortex, piriform cortex, glial wedge, midline zipper glia, indusium griseum and the area surrounding the anterior commissure (AC) but not on AC axons (at protein level). In the adult eye, expressed in retinal layers, lens epithelium, and ciliary body where it is expressed predominantly in the inner non-pigmented layer. Expressed in almost all brain regions in the embryo, in the cortex and the lateral ventricle at P0 and is restricted to the subventricular zone and lateral nucleus of the amygdala in adults. Prominent expression in hippocampal regions from early postnatal stages until postnatal day 15 and gradually declines at later stages. Expressed in almost all bone regions in the femurs of juveniles. In the inner ear, accumulates in nonprosensory regions during early embryonic stages and in both nonprosensory and prosensory regions in late embryonic stages. In the adult ear, expressed in the organ of Corti, spiral ganglion cells, and the stria vascularis. Highly expressed in the liver where it is detected primarily in hepatocytes but not in non-parenchymal cells.

The protein resides in the secreted. In terms of biological role, contributes to various developmental events and other processes such as wound healing and cholesterol homeostasis through its interactions with multiple signaling pathways. Wnt signaling inhibitor which competes with WNT2B for binding to Wnt receptor FZD4 and represses WNT2B-dependent development of the peripheral eye. Plays a role in regulating the hair cycle by controlling TGFB1 signaling. Required for the development of the anterior commissure in the brain by inhibiting neurite outgrowth. Essential for terminal differentiation of hippocampal neural stem cells. Plays a role in regulating bone elongation and bone mass by modulating growth plate chondrocyte function and overall body size. Required for development of the inner ear through its involvement in stereocilia formation in inner hair cells. Facilitates wound healing by inhibiting secretion of TGFB1 from macrophages which prevents myofibroblast differentiation, maintaining inflammatory cell quiescence. Plays a role in cholesterol homeostasis by reducing circulating high-density lipoprotein cholesterol, lowering cholesterol efflux capacity and decreasing cholesterol-to-bile acid conversion in the liver. In one study, shown to negatively regulate sympathetic innervation in brown fat, leading to reduced energy expenditure. In another study, shown not to affect brown fat thermogenic capacity, body weight gain or glucose homeostasis. The protein is Tsukushi of Mus musculus (Mouse).